A 290-amino-acid polypeptide reads, in one-letter code: Phosphatidylserine decarboxylase proenzyme (290 aa).

Catalysis depends on charge relay system; for autoendoproteolytic cleavage activity residues Asp96, His153, and Ser257. The active-site Schiff-base intermediate with substrate; via pyruvic acid; for decarboxylase activity is Ser257. Ser257 is subject to Pyruvic acid (Ser); by autocatalysis.

The protein belongs to the phosphatidylserine decarboxylase family. PSD-B subfamily. Prokaryotic type I sub-subfamily. As to quaternary structure, heterodimer of a large membrane-associated beta subunit and a small pyruvoyl-containing alpha subunit. Pyruvate is required as a cofactor. In terms of processing, is synthesized initially as an inactive proenzyme. Formation of the active enzyme involves a self-maturation process in which the active site pyruvoyl group is generated from an internal serine residue via an autocatalytic post-translational modification. Two non-identical subunits are generated from the proenzyme in this reaction, and the pyruvate is formed at the N-terminus of the alpha chain, which is derived from the carboxyl end of the proenzyme. The autoendoproteolytic cleavage occurs by a canonical serine protease mechanism, in which the side chain hydroxyl group of the serine supplies its oxygen atom to form the C-terminus of the beta chain, while the remainder of the serine residue undergoes an oxidative deamination to produce ammonia and the pyruvoyl prosthetic group on the alpha chain. During this reaction, the Ser that is part of the protease active site of the proenzyme becomes the pyruvoyl prosthetic group, which constitutes an essential element of the active site of the mature decarboxylase.

The protein localises to the cell membrane. The enzyme catalyses a 1,2-diacyl-sn-glycero-3-phospho-L-serine + H(+) = a 1,2-diacyl-sn-glycero-3-phosphoethanolamine + CO2. Its pathway is phospholipid metabolism; phosphatidylethanolamine biosynthesis; phosphatidylethanolamine from CDP-diacylglycerol: step 2/2. Catalyzes the formation of phosphatidylethanolamine (PtdEtn) from phosphatidylserine (PtdSer). This chain is Phosphatidylserine decarboxylase proenzyme, found in Haemophilus influenzae (strain 86-028NP).